Reading from the N-terminus, the 392-residue chain is Bifunctional enzyme IspD/IspF (392 aa).

2 2-C-methyl-D-erythritol 4-phosphate cytidylyltransferase regions span residues 1 to 234 (MTES…MMRT) and 1 to 235 (MTES…MRTA). The 2-C-methyl-D-erythritol 2,4-cyclodiphosphate synthase stretch occupies residues 235-392 (AVGMGYDVHR…AVATIQLPET (158 aa)). A divalent metal cation is bound by residues aspartate 241 and histidine 243. 4-CDP-2-C-methyl-D-erythritol 2-phosphate is bound by residues 241 to 243 (DVH) and 267 to 268 (HS). Histidine 275 is a binding site for a divalent metal cation. 4-CDP-2-C-methyl-D-erythritol 2-phosphate-binding positions include 289 to 291 (DIG), 365 to 368 (TTTE), phenylalanine 372, and arginine 375.

This sequence in the N-terminal section; belongs to the IspD/TarI cytidylyltransferase family. IspD subfamily. It in the C-terminal section; belongs to the IspF family. It depends on a divalent metal cation as a cofactor.

The catalysed reaction is 2-C-methyl-D-erythritol 4-phosphate + CTP + H(+) = 4-CDP-2-C-methyl-D-erythritol + diphosphate. The enzyme catalyses 4-CDP-2-C-methyl-D-erythritol 2-phosphate = 2-C-methyl-D-erythritol 2,4-cyclic diphosphate + CMP. It participates in isoprenoid biosynthesis; isopentenyl diphosphate biosynthesis via DXP pathway; isopentenyl diphosphate from 1-deoxy-D-xylulose 5-phosphate: step 2/6. Its pathway is isoprenoid biosynthesis; isopentenyl diphosphate biosynthesis via DXP pathway; isopentenyl diphosphate from 1-deoxy-D-xylulose 5-phosphate: step 4/6. Bifunctional enzyme that catalyzes the formation of 4-diphosphocytidyl-2-C-methyl-D-erythritol from CTP and 2-C-methyl-D-erythritol 4-phosphate (MEP) (IspD), and catalyzes the conversion of 4-diphosphocytidyl-2-C-methyl-D-erythritol 2-phosphate (CDP-ME2P) to 2-C-methyl-D-erythritol 2,4-cyclodiphosphate (ME-CPP) with a corresponding release of cytidine 5-monophosphate (CMP) (IspF). This Sphingopyxis alaskensis (strain DSM 13593 / LMG 18877 / RB2256) (Sphingomonas alaskensis) protein is Bifunctional enzyme IspD/IspF.